The following is an 873-amino-acid chain: Kinase suppressor of Ras 1 (873 aa).

Disordered stretches follow at residues 1-24 (MDRA…GAAA), 174-230 (EHKM…PGLS), and 251-281 (LHSF…PSRK). The tract at residues 1-170 (MDRAALRAAA…ALTCLRKVTG (170 aa)) is mediates association with membranes. Residues 206–216 (ASTQGPRSISV) are compositionally biased toward polar residues. Thr-256 and Thr-260 each carry phosphothreonine. Ser-297 carries the phosphoserine; by MARK3 modification. At Ser-320 the chain carries Phosphoserine. Residues 333–377 (THRFSTKSWLSQVCNVCQKSMIFGVKCKHCRLKCHNKCTKEAPAC) form a Phorbol-ester/DAG-type zinc finger. Zn(2+) is bound at residue His-334. At Ser-337 the chain carries Phosphoserine. Residues Cys-346, Cys-349, Cys-359, Cys-362, His-367, Cys-370, and Cys-377 each coordinate Zn(2+). Ser-392 carries the phosphoserine; by MARK3 modification. Thr-411 is subject to Phosphothreonine. Disordered regions lie at residues 416-473 (LTKK…RFSF) and 506-544 (HEAE…PISR). Residues 429–458 (SSSNPSSTTSSTPSSPAPFLTSSNPSSATT) are compositionally biased toward low complexity. Residues 506-519 (HEAEAEEPEAGKSE) show a composition bias toward basic and acidic residues. Ser-518 carries the phosphoserine modification. Acidic residues predominate over residues 520–530 (AEDDEEDEVDD). In terms of domain architecture, Protein kinase spans 563–833 (VELGEPIGQG…MDMLERLPKL (271 aa)). 569 to 577 (IGQGRWGRV) serves as a coordination point for ATP. The active-site Proton acceptor is Asp-683. ATP contacts are provided by Lys-685 and Asp-700. Ser-838 carries the post-translational modification Phosphoserine.

It belongs to the protein kinase superfamily. TKL Ser/Thr protein kinase family. As to quaternary structure, homodimer. Heterodimerizes (via N-terminus) with BRAF (via N-terminus) in a MAP2K1/MEK1 or MAP2K2/MEK2-dependent manner. Interacts with MAP2K1/MEK1 and MAP2K2/MEK2. Binding to MAP2K1/MEK1 releases the intramolecular inhibitory interaction between KSR1 N-terminus and kinase domains which is required for the subsequent RSK1 dimerization with BRAF. Identified in a complex with AKAP13, MAP2K1 and BRAF. Interacts with AKAP13 and BRAF. Interacts with RAF and MAPK/ERK, in a Ras-dependent manner. Interacts with 14-3-3 proteins including YWHAB. Interacts with HSP90AA1/HSP90, YWHAE/14-3-3 and CDC37. The binding of 14-3-3 proteins to phosphorylated KSR1 prevents the membrane localization. Interacts with MARK3/C-TAK1. Interacts with PPP2R1A and PPP2CA. Interacts with VRK2. Phosphorylated on Ser-297 and, to a higher extent, on Ser-392 by MARK3. Dephosphorylated on Ser-392 by PPP2CA. Phosphorylated KSR1 is cytoplasmic and dephosphorylated KSR1 is membrane-associated. Phosphorylated by PKA at Ser-838. Phosphorylation at Ser-838 is required for cAMP-dependent activation of MAPK1 and/or MAPK3. In terms of tissue distribution, expressed in brain, spleen and testis. Isoform 1 is highly expressed spleen and weakly in testis, and isoform 2 is highly expressed in brain and weakly in testis.

Its subcellular location is the cytoplasm. It localises to the membrane. The protein localises to the cell membrane. The protein resides in the cell projection. It is found in the ruffle membrane. Its subcellular location is the endoplasmic reticulum membrane. The enzyme catalyses L-seryl-[protein] + ATP = O-phospho-L-seryl-[protein] + ADP + H(+). The catalysed reaction is L-threonyl-[protein] + ATP = O-phospho-L-threonyl-[protein] + ADP + H(+). In terms of biological role, part of a multiprotein signaling complex which promotes phosphorylation of Raf family members and activation of downstream MAP kinases. Independently of its kinase activity, acts as MAP2K1/MEK1 and MAP2K2/MEK2-dependent allosteric activator of BRAF; upon binding to MAP2K1/MEK1 or MAP2K2/MEK2, dimerizes with BRAF and promotes BRAF-mediated phosphorylation of MAP2K1/MEK1 and/or MAP2K2/MEK2. Promotes activation of MAPK1 and/or MAPK3, both in response to EGF and to cAMP. Its kinase activity is unsure. Some protein kinase activity has been detected in vitro, however the physiological relevance of this activity is unknown. This Mus musculus (Mouse) protein is Kinase suppressor of Ras 1 (Ksr1).